A 155-amino-acid polypeptide reads, in one-letter code: Ribonuclease H (155 aa).

One can recognise an RNase H type-1 domain in the interval 1–142 (MLKQVEIFTD…CDELARAAAS (142 aa)). Positions 10, 48, 70, and 134 each coordinate Mg(2+).

This sequence belongs to the RNase H family. Monomer. The cofactor is Mg(2+).

Its subcellular location is the cytoplasm. It carries out the reaction Endonucleolytic cleavage to 5'-phosphomonoester.. Endonuclease that specifically degrades the RNA of RNA-DNA hybrids. The sequence is that of Ribonuclease H from Klebsiella pneumoniae (strain 342).